The following is a 484-amino-acid chain: Cytochrome P450 monooxygenase poxD (484 aa).

The chain crosses the membrane as a helical span at residues Val-2–Ser-24. Cys-429 serves as a coordination point for heme.

Belongs to the cytochrome P450 family. Heme serves as cofactor.

Its subcellular location is the membrane. It functions in the pathway secondary metabolite biosynthesis. Its function is as follows. Cytochrome P450 monooxygenase; part of the gene cluster that mediates the biosynthesis of oxaleimides, cytotoxic compounds containing an unusual disubstituted succinimide moiety. The first step of the pathway is provided by the HR-PKS poxF that serves in a new mode of collaborative biosynthesis with the PKS-NRPS poxE, by providing the olefin containing amino acid substrate via the synthesis of an ACP-bound dec-4-enoate. The cytochrome P450 monooxygenase poxM-catalyzed oxidation at the alpha-position creates the enzyme-bound 2-hydroxydec-4-enoyl-ACP thioester, which may be prone to spontaneous hydrolysis to yield 2-hydroxydec-4-enoic acid due to increased electrophilicity of the carbonyl. 2-hydroxydec-4-enoic acid can then be further oxidized by poxM to yield the alpha-ketoacid 2-oxodec-4-enoicacid, which is reductively aminated by the aminotransferase poxL to yield (S,E)-2-aminodec-4-enoic acid. The Hybrid PKS-NRPS synthetase poxE then performs condensation between the octaketide product of its PKS modules and the amino group of (S,E)-2-aminodec-4-enoic acid which is activated and incorporated by the adenylation domain. The resulting aminoacyl product can be cyclized by the Diels-Alderase PoxQ and reductively released by the reductive (R) domain of poxE to yield an aldehyde intermediate. The released aldehyde is then substrate for a Knoevenagel condensation by the hydrolyase poxO followed by an oxidation at the 5-position of the pyrrolidone ring. The presence of the olefin from the amino acid building block allows for migration of the substituted allyl group to occur. This allylic transposition reaction takes place in a conjugate addition, semipinacol-like fashion to yield a succinimide intermediate. Iterative two-electron oxidations of the C7 methyl of the succinimide intermediate to the carboxylic acid can be catalyzed by one of two remaining cytochrome P450 monooxygenasess poxC or poxD to yield oxaleimide A. Subsequent oxidation yields the maleimide scaffold oxaleimide I. Both oxaleimide A and oxaleimide I can undergo oxidative modifications in the decalin ring to yield the series of products oxaleimides B to H. This Penicillium oxalicum protein is Cytochrome P450 monooxygenase poxD.